A 466-amino-acid polypeptide reads, in one-letter code: Alpha-1A adrenergic receptor (466 aa).

The Extracellular portion of the chain corresponds to 1-27 (MVFLSGNASDSSNCTQPPAPVNISKAI). 3 N-linked (GlcNAc...) asparagine glycosylation sites follow: Asn-7, Asn-13, and Asn-22. Residues 28 to 51 (LLGVILGGLILFGVLGNILVILSV) traverse the membrane as a helical segment. Topologically, residues 52–64 (ACHRHLHSVTHYY) are cytoplasmic. A helical membrane pass occupies residues 65–88 (IVNLAVADLLLTSTVLPFSAIFEV). Residues 89–99 (LGYWAFGRVFC) are Extracellular-facing. Cys-99 and Cys-176 form a disulfide bridge. A helical transmembrane segment spans residues 100–122 (NIWAAVDVLCCTASIMGLCIISI). The Cytoplasmic segment spans residues 123–143 (DRYIGVSYPLRYPTIVTQRRG). The helical transmembrane segment at 144–167 (LMALLCVWALSLVISIGPLFGWRQ) threads the bilayer. The Extracellular portion of the chain corresponds to 168 to 181 (PAPEDETICQINEE). A helical transmembrane segment spans residues 182-205 (PGYVLFSALGSFYLPLAIILVMYC). The Cytoplasmic portion of the chain corresponds to 206-273 (RVYVVAKRES…FSREKKAAKT (68 aa)). At Ser-215 the chain carries Phosphoserine; by PKA. A helical transmembrane segment spans residues 274-297 (LGIVVGCFVLCWLPFFLVMPIGSF). The Extracellular portion of the chain corresponds to 298 to 305 (FPDFKPSE). Residues 306-329 (TVFKIVFWLGYLNSCINPIIYPCS) form a helical membrane-spanning segment. At 330-466 (SQEFKKAFQN…ISLSENGEEV (137 aa)) the chain is on the cytoplasmic side. The Nuclear localization signal motif lies at 334 to 349 (KKAFQNVLRIQCLCRK). Cys-345 is lipidated: S-palmitoyl cysteine.

The protein belongs to the G-protein coupled receptor 1 family. Adrenergic receptor subfamily. ADRA1A sub-subfamily. As to quaternary structure, homo- and heterooligomer. Heterooligomerizes with ADRA1B homooligomers in cardiac myocytes. Interacts with CAVIN4. In terms of processing, C-terminal Ser or Thr residues may be phosphorylated. Expressed in heart, brain, liver and prostate, but not in kidney, lung, adrenal, aorta and pituitary. Within the prostate, expressed in the apex, base, periurethral and lateral lobe. Isoform 4 is the most abundant isoform expressed in the prostate with high levels also detected in liver and heart.

It localises to the nucleus membrane. The protein localises to the cell membrane. Its subcellular location is the cytoplasm. The protein resides in the membrane. It is found in the caveola. In terms of biological role, this alpha-adrenergic receptor mediates its action by association with G proteins that activate a phosphatidylinositol-calcium second messenger system. Its effect is mediated by G(q) and G(11) proteins. Nuclear ADRA1A-ADRA1B heterooligomers regulate phenylephrine(PE)-stimulated ERK signaling in cardiac myocytes. The chain is Alpha-1A adrenergic receptor (ADRA1A) from Homo sapiens (Human).